The following is a 185-amino-acid chain: NADH-quinone oxidoreductase subunit B (185 aa).

[4Fe-4S] cluster contacts are provided by cysteine 38, cysteine 39, cysteine 104, and cysteine 133. Basic and acidic residues predominate over residues 165–176 (AAEAYREEERQA). Positions 165–185 (AAEAYREEERQAARSALGPRS) are disordered.

This sequence belongs to the complex I 20 kDa subunit family. NDH-1 is composed of 14 different subunits. Subunits NuoB, C, D, E, F, and G constitute the peripheral sector of the complex. [4Fe-4S] cluster is required as a cofactor.

The protein localises to the cell membrane. It carries out the reaction a quinone + NADH + 5 H(+)(in) = a quinol + NAD(+) + 4 H(+)(out). Functionally, NDH-1 shuttles electrons from NADH, via FMN and iron-sulfur (Fe-S) centers, to quinones in the respiratory chain. The immediate electron acceptor for the enzyme in this species is believed to be ubiquinone. Couples the redox reaction to proton translocation (for every two electrons transferred, four hydrogen ions are translocated across the cytoplasmic membrane), and thus conserves the redox energy in a proton gradient. The sequence is that of NADH-quinone oxidoreductase subunit B from Thermomicrobium roseum (strain ATCC 27502 / DSM 5159 / P-2).